We begin with the raw amino-acid sequence, 552 residues long: Putative transport protein YE4162 (552 aa).

6 helical membrane passes run 1-21 (MSAI…GLWI), 26-46 (VYGV…VGHF), 65-85 (FGLI…FFSS), 96-116 (FAIL…KLFA), 119-139 (LPII…LGAA), and 158-178 (MGYA…MWLI). RCK C-terminal domains lie at 192–276 (EFDS…VVGE) and 279–361 (DVTL…VVGN). Transmembrane regions (helical) follow at residues 371-391 (MLPV…PLFI), 393-413 (GFPA…ALIL), 439-459 (IVLF…NTLV), 464-484 (LAWI…VGIL), 493-513 (YLTL…LAFA), and 530-550 (VYPL…VLFW).

Belongs to the AAE transporter (TC 2.A.81) family. YidE subfamily.

It is found in the cell membrane. This chain is Putative transport protein YE4162, found in Yersinia enterocolitica serotype O:8 / biotype 1B (strain NCTC 13174 / 8081).